A 311-amino-acid chain; its full sequence is Dehydrogenase/reductase SDR family member 7C (311 aa).

The first 18 residues, 1–18 (MGFLTFLIVPLLILGISG), serve as a signal peptide directing secretion. Residue 41–65 (VITDAISGLGKECSRVFHSAGARLV) participates in NAD(+) binding. Substrate is bound at residue T178. Y191 serves as the catalytic Proton acceptor.

This sequence belongs to the short-chain dehydrogenases/reductases (SDR) family.

Its subcellular location is the secreted. In terms of biological role, putative oxidoreductase. The chain is Dehydrogenase/reductase SDR family member 7C (dhrs7c) from Xenopus tropicalis (Western clawed frog).